A 72-amino-acid polypeptide reads, in one-letter code: Translation initiation factor IF-1 (72 aa).

The region spanning 1–72 is the S1-like domain; that stretch reads MSKEDVIEMQ…TRGRITWRAK (72 aa).

The protein belongs to the IF-1 family. In terms of assembly, component of the 30S ribosomal translation pre-initiation complex which assembles on the 30S ribosome in the order IF-2 and IF-3, IF-1 and N-formylmethionyl-tRNA(fMet); mRNA recruitment can occur at any time during PIC assembly.

It localises to the cytoplasm. Its function is as follows. One of the essential components for the initiation of protein synthesis. Stabilizes the binding of IF-2 and IF-3 on the 30S subunit to which N-formylmethionyl-tRNA(fMet) subsequently binds. Helps modulate mRNA selection, yielding the 30S pre-initiation complex (PIC). Upon addition of the 50S ribosomal subunit IF-1, IF-2 and IF-3 are released leaving the mature 70S translation initiation complex. The chain is Translation initiation factor IF-1 from Clostridium acetobutylicum (strain ATCC 824 / DSM 792 / JCM 1419 / IAM 19013 / LMG 5710 / NBRC 13948 / NRRL B-527 / VKM B-1787 / 2291 / W).